The sequence spans 708 residues: F-box protein MAX2 homolog A (708 aa).

An F-box domain is found at 2 to 49 (ATQLNDLPDVILSNIIAAVTDVRSRNSTSFVCRKWLVLERSTRVSLTL).

As to quaternary structure, part of a putative SCF (SKP1/Cullin/F-box) ubiquitin ligase complex. Interacts with DAD2. Interacts with KAI2IA in the presence of (-)-germacrene D. Mainly expressed in fully expanded leaves, lateral roots, axillary and shoot apex, and, to a lower extent, in internodes and nodes.

The protein localises to the nucleus. Component of SCF(ASK-cullin-F-box) E3 ubiquitin ligase complexes, which may mediate the ubiquitination and subsequent proteasomal degradation of target proteins. Is necessary for responses to strigolactones and may be involved in the ubiquitin-mediated degradation of specific proteins that activate axillary growth. Targets probably SMAX1A to degradation upon the formation of an E3 SCF ubiquitin ligase complex (ASK-cullin-F-box) containing MAX2A and KAI2IA in response to (-)-germacrene D in the stigma. The polypeptide is F-box protein MAX2 homolog A (Petunia hybrida (Petunia)).